Here is a 920-residue protein sequence, read N- to C-terminus: Histone-lysine N-methyltransferase, H3 lysine-4 specific (920 aa).

Residues 94-179 (TQVFVSNISP…KPLSVVLDRD (86 aa)) form the RRM domain. A compositionally biased stretch (basic and acidic residues) spans 205-216 (KQRFEREDESSR). Disordered regions lie at residues 205-242 (KQRFEREDESSRQKLSAAMNEDIPPWRQPSKNSQTLSN) and 448-485 (KRVDSSKMNLSAGSKTKSKLQRRRRRRHEARPLHYQLN). Polar residues-rich tracts occupy residues 233 to 242 (PSKNSQTLSN) and 453 to 462 (SKMNLSAGSK). The span at 463-476 (TKSKLQRRRRRRHE) shows a compositional bias: basic residues. The short motif at 749-754 (RVNNRR) is the RxxxRR motif element. The 118-residue stretch at 781–898 (KQLHFGPSRI…HGEELTYDYK (118 aa)) folds into the SET domain. Tyr-897 contacts S-adenosyl-L-methionine. The Post-SET domain occupies 904-920 (DKIPCLCGAPTCRGYLN).

The protein belongs to the class V-like SAM-binding methyltransferase superfamily. Component of the Set1C/COMPASS complex composed of ash2, sdc1, set1, shg1, spp1, swd1, swd2 and swd3.

The protein resides in the nucleus. The protein localises to the chromosome. The enzyme catalyses L-lysyl(4)-[histone H3] + 3 S-adenosyl-L-methionine = N(6),N(6),N(6)-trimethyl-L-lysyl(4)-[histone H3] + 3 S-adenosyl-L-homocysteine + 3 H(+). It catalyses the reaction N(6)-methyl-L-lysyl(4)-[histone H3] + S-adenosyl-L-methionine = N(6),N(6)-dimethyl-L-lysyl(4)-[histone H3] + S-adenosyl-L-homocysteine + H(+). It carries out the reaction N(6),N(6)-dimethyl-L-lysyl(4)-[histone H3] + S-adenosyl-L-methionine = N(6),N(6),N(6)-trimethyl-L-lysyl(4)-[histone H3] + S-adenosyl-L-homocysteine + H(+). Functionally, catalytic component of the COMPASS (Set1C) complex that specifically mono-, di- and trimethylates histone H3 to form H3K4me1/2/3. Binds RNA which might negatively affect its histone methyltransferase activity. COMPASS recognizes ubiquitinated H2B on one face of the nucleosome which stimulates the methylation of H3 on the opposing face. Methylation promotes maintenance of active chromatin states at euchromatic chromosomal domains and is present throughout the cell cycle. Plays a role in telomere maintenance and DNA repair in an ATM kinase rad3-dependent pathway. Required for efficient telomeric and centromeric silencing. In Schizosaccharomyces pombe (strain 972 / ATCC 24843) (Fission yeast), this protein is Histone-lysine N-methyltransferase, H3 lysine-4 specific.